A 100-amino-acid polypeptide reads, in one-letter code: Urease subunit gamma (100 aa).

The protein belongs to the urease gamma subunit family. In terms of assembly, heterotrimer of UreA (gamma), UreB (beta) and UreC (alpha) subunits. Three heterotrimers associate to form the active enzyme.

It localises to the cytoplasm. The enzyme catalyses urea + 2 H2O + H(+) = hydrogencarbonate + 2 NH4(+). It functions in the pathway nitrogen metabolism; urea degradation; CO(2) and NH(3) from urea (urease route): step 1/1. Its function is as follows. Ureolysis may allow urea to be employed as a nitrogen source for growth and produces ammonia which may protect from killing at low pH. The polypeptide is Urease subunit gamma (Streptococcus salivarius (strain 57.I)).